A 419-amino-acid chain; its full sequence is Tyrosine--tRNA ligase (419 aa).

Tyr34 contributes to the L-tyrosine binding site. A 'HIGH' region motif is present at residues 39–48; sequence PTADSLHLGN. Residues Tyr169 and Gln173 each coordinate L-tyrosine. The 'KMSKS' region motif lies at 229 to 233; the sequence is KFGKS. Lys232 provides a ligand contact to ATP. The 67-residue stretch at 353 to 419 folds into the S4 RNA-binding domain; the sequence is LTLVELLISA…GKKKNFVLTY (67 aa).

It belongs to the class-I aminoacyl-tRNA synthetase family. TyrS type 1 subfamily. Homodimer.

Its subcellular location is the cytoplasm. It carries out the reaction tRNA(Tyr) + L-tyrosine + ATP = L-tyrosyl-tRNA(Tyr) + AMP + diphosphate + H(+). Functionally, catalyzes the attachment of tyrosine to tRNA(Tyr) in a two-step reaction: tyrosine is first activated by ATP to form Tyr-AMP and then transferred to the acceptor end of tRNA(Tyr). The polypeptide is Tyrosine--tRNA ligase (Lactococcus lactis subsp. lactis (strain IL1403) (Streptococcus lactis)).